The primary structure comprises 201 residues: Recombination protein RecR (201 aa).

A C4-type zinc finger spans residues 59–74 (CEICGNMDTENICCIC). In terms of domain architecture, Toprim spans 82 to 177 (SVIAVVETVA…KISRLASGIP (96 aa)).

This sequence belongs to the RecR family.

In terms of biological role, may play a role in DNA repair. It seems to be involved in an RecBC-independent recombinational process of DNA repair. It may act with RecF and RecO. The chain is Recombination protein RecR from Rickettsia felis (strain ATCC VR-1525 / URRWXCal2) (Rickettsia azadi).